Reading from the N-terminus, the 108-residue chain is Mitochondrial import inner membrane translocase subunit tim13 (108 aa).

A Twin CX3C motif motif is present at residues 52–75; it reads CFENCITAPGSSLSASESTCLSSC. Disulfide bonds link Cys52–Cys75 and Cys56–Cys71.

The protein belongs to the small Tim family. In terms of assembly, heterohexamer; composed of 3 copies of TIM8 and 3 copies of TIM13, named soluble 70 kDa complex. Associates with the TIM22 complex, whose core is composed of TIM22 and TIM54. Interacts with the transmembrane regions of multi-pass transmembrane proteins in transit.

The protein resides in the mitochondrion inner membrane. Functionally, mitochondrial intermembrane chaperone that participates in the import and insertion of some multi-pass transmembrane proteins into the mitochondrial inner membrane. Also required for the transfer of beta-barrel precursors from the TOM complex to the sorting and assembly machinery (SAM complex) of the outer membrane. Acts as a chaperone-like protein that protects the hydrophobic precursors from aggregation and guide them through the mitochondrial intermembrane space. The TIM8-TIM13 complex is non essential and only mediates the import of few proteins, while the predominant TIM9-TIM10 70 kDa complex is crucial and mediates the import of much more proteins. This chain is Mitochondrial import inner membrane translocase subunit tim13 (tim13), found in Emericella nidulans (strain FGSC A4 / ATCC 38163 / CBS 112.46 / NRRL 194 / M139) (Aspergillus nidulans).